The following is a 150-amino-acid chain: UPF0178 protein Rru_A0086 (150 aa).

Belongs to the UPF0178 family.

The sequence is that of UPF0178 protein Rru_A0086 from Rhodospirillum rubrum (strain ATCC 11170 / ATH 1.1.1 / DSM 467 / LMG 4362 / NCIMB 8255 / S1).